A 553-amino-acid polypeptide reads, in one-letter code: Undecaprenyl phosphate-alpha-4-amino-4-deoxy-L-arabinose arabinosyl transferase (553 aa).

Transmembrane regions (helical) follow at residues 6-26 (ACKV…LLPL), 89-109 (FGSV…AMMM), 115-135 (IAFA…IGTY), 180-200 (FMTK…PIVI), 208-228 (IVCF…PWVI), 258-278 (IAPF…WLGL), 293-313 (NPEM…FSIA), 317-337 (LPTY…KFGV), 352-372 (GMVN…MEVV), 386-406 (WVLA…CFAL), and 410-430 (YWLL…HALP).

Belongs to the glycosyltransferase 83 family.

Its subcellular location is the cell inner membrane. It catalyses the reaction 4-amino-4-deoxy-alpha-L-arabinopyranosyl di-trans,octa-cis-undecaprenyl phosphate + lipid IVA = lipid IIA + di-trans,octa-cis-undecaprenyl phosphate.. Its pathway is lipopolysaccharide metabolism; 4-amino-4-deoxy-beta-L-arabinose-lipid A biosynthesis. Catalyzes the transfer of the L-Ara4N moiety of the glycolipid undecaprenyl phosphate-alpha-L-Ara4N to lipid A. The modified arabinose is attached to lipid A and is required for resistance to polymyxin and cationic antimicrobial peptides. In Photorhabdus laumondii subsp. laumondii (strain DSM 15139 / CIP 105565 / TT01) (Photorhabdus luminescens subsp. laumondii), this protein is Undecaprenyl phosphate-alpha-4-amino-4-deoxy-L-arabinose arabinosyl transferase (arnT).